The sequence spans 282 residues: Protein GAM-1 (282 aa).

The BC-box-like motif lies at S251–V260.

In terms of assembly, interacts with host HDAC1. Interacts with host E1-activating enzyme (SAE1/UBA2 heterodimer). Interacts with host retinoblastoma protein. Seems to form a complex with host E4F1 and HDAC1. Seems to form complexes with either CUL2-elongin BC complex-RBX1 or CUL5-elongin BC complex-RBX1. Interacts with TCEB1/Elongin-C, CUL2 and CUL5 in vitro.

The protein resides in the host nucleus. Its function is as follows. Early protein essential for viral replication. Strong and global transcriptional activator of both viral and cellular genes. Activates transcription by blocking host retinoblastoma protein (RB) and inhibiting the SUMO pathway. Inhibition of host RB leads to the activation of E2F1-dependent transcription and, in particular, of E2F1-regulated S-phase genes. Stimulation of progression from G1 to S phase allows the virus to efficiently use the cellular DNA replicating machinery to achieve viral genome replication. Blocks the SUMO pathway by targeting the E1 enzyme (SAE1/UBA2 heterodimer) to the ubiquitin-proteasome machinery. Mediates SAE1 degradation possibly through the formation of complexes with either CUL2-elongin BC complex-RBX1 or CUL5-elongin BC complex-RBX1. The degradation of UBA2 is probably a consequent effect of SAE1 disappearance. Inhibits HDAC1 sumoylation, thereby interfering with histone deacetylation mediated by HDAC1, leading to activation of transcription. Mediates induction of heat-shock response. Seems to have an antiapoptotic function. This chain is Protein GAM-1, found in Galliformes (FAdV-1).